A 267-amino-acid polypeptide reads, in one-letter code: Putative transcription factor Ovo-like 1 (267 aa).

C2H2-type zinc fingers lie at residues 118–140 (FTCHICQKAFTYQRMLNRHMKCH), 146–168 (HLCTYCGKGFNDTFDLKRHVRTH), 174–197 (YKCSLCDKAFTQRCSLESHLKKIH), and 213–235 (YVCEECGCTSESQEGHVLHLKEH).

It is found in the nucleus. Its function is as follows. Putative transcription factor. Involved in hair formation and spermatogenesis. May function in the differentiation and/or maintenance of the urogenital system. The polypeptide is Putative transcription factor Ovo-like 1 (OVOL1) (Bos taurus (Bovine)).